A 319-amino-acid chain; its full sequence is Ribonuclease Z (319 aa).

Zn(2+) contacts are provided by His62, His64, Asp66, His67, His145, Asp215, and His273. Asp66 serves as the catalytic Proton acceptor.

It belongs to the RNase Z family. As to quaternary structure, homodimer. Zn(2+) is required as a cofactor.

The enzyme catalyses Endonucleolytic cleavage of RNA, removing extra 3' nucleotides from tRNA precursor, generating 3' termini of tRNAs. A 3'-hydroxy group is left at the tRNA terminus and a 5'-phosphoryl group is left at the trailer molecule.. Functionally, zinc phosphodiesterase, which displays some tRNA 3'-processing endonuclease activity. Probably involved in tRNA maturation, by removing a 3'-trailer from precursor tRNA. This Borrelia duttonii (strain Ly) protein is Ribonuclease Z.